A 153-amino-acid polypeptide reads, in one-letter code: Acetylacetone-cleaving enzyme (153 aa).

Homotetramer. Fe cation serves as cofactor.

The enzyme catalyses acetylacetone + O2 = methylglyoxal + acetate + H(+). The protein operates within xenobiotic degradation; acetylacetone degradation. Its function is as follows. Cleaves acetylacetone to equimolar amounts of methylglyoxal and acetate, consuming one equivalent of molecular oxygen. This Acinetobacter johnsonii protein is Acetylacetone-cleaving enzyme (dke1).